A 127-amino-acid polypeptide reads, in one-letter code: Large ribosomal subunit protein bL19 (127 aa).

The protein belongs to the bacterial ribosomal protein bL19 family.

Its function is as follows. This protein is located at the 30S-50S ribosomal subunit interface and may play a role in the structure and function of the aminoacyl-tRNA binding site. This is Large ribosomal subunit protein bL19 from Bradyrhizobium sp. (strain BTAi1 / ATCC BAA-1182).